A 358-amino-acid chain; its full sequence is Peptide chain release factor 1 (358 aa).

The residue at position 233 (glutamine 233) is an N5-methylglutamine. Residues 286–309 are disordered; the sequence is AELASARKSQVGTGDRSERIRTYN.

Belongs to the prokaryotic/mitochondrial release factor family. Methylated by PrmC. Methylation increases the termination efficiency of RF1.

The protein resides in the cytoplasm. Its function is as follows. Peptide chain release factor 1 directs the termination of translation in response to the peptide chain termination codons UAG and UAA. This Carboxydothermus hydrogenoformans (strain ATCC BAA-161 / DSM 6008 / Z-2901) protein is Peptide chain release factor 1.